The sequence spans 201 residues: MATAVAGPEIERLIQLLSRLPGLGPRSARRAALHLIKKREALMAPLASALQVAIERIQVCKTCGNIDTQNPCTVCTDPRRDPAIIVVVADVADLWALERAHASNGRYHVLGATLSPLDGVGPQDLTIDALVARAHDPQVSEIVLALNATVDGQTTAHYITDLLMEANVKVTRLAHGVPVGGELDYLDEGTLSAAMRQRTLF.

Residues 60 to 75 form a C4-type zinc finger; that stretch reads CKTCGNIDTQNPCTVC. Positions 83–178 constitute a Toprim domain; it reads AIIVVVADVA…KVTRLAHGVP (96 aa).

Belongs to the RecR family.

In terms of biological role, may play a role in DNA repair. It seems to be involved in an RecBC-independent recombinational process of DNA repair. It may act with RecF and RecO. In Rhodopseudomonas palustris (strain BisA53), this protein is Recombination protein RecR.